The primary structure comprises 411 residues: Putative competence-damage inducible protein (411 aa).

It belongs to the CinA family.

The sequence is that of Putative competence-damage inducible protein from Caldicellulosiruptor bescii (strain ATCC BAA-1888 / DSM 6725 / KCTC 15123 / Z-1320) (Anaerocellum thermophilum).